The primary structure comprises 263 residues: Small ribosomal subunit protein eS4 (263 aa).

In terms of domain architecture, S4 RNA-binding spans 42–104; the sequence is LPLIVFLRNR…TGEHFRLVYD (63 aa).

The protein belongs to the eukaryotic ribosomal protein eS4 family.

The polypeptide is Small ribosomal subunit protein eS4 (RPS4Y1) (Gorilla gorilla gorilla (Western lowland gorilla)).